A 677-amino-acid chain; its full sequence is Polyunsaturated fatty acid lipoxygenase ALOX8 (677 aa).

The 124-residue stretch at 2–125 (AKCRVRVSTG…ELVLREGAAK (124 aa)) folds into the PLAT domain. Ca(2+) contacts are provided by Gly-15, Gly-17, Asp-39, His-40, Gly-42, Glu-44, Asp-86, and Ala-87. Positions 126–677 (VSWQDHHPTL…PPLIENSVSI (552 aa)) constitute a Lipoxygenase domain. Fe cation is bound by residues His-374, His-379, His-554, and Ile-677.

This sequence belongs to the lipoxygenase family. Fe cation is required as a cofactor. Expressed in epidermis and brain. No expression found in heart, spleen, liver, skeletal muscle, kidney or testis.

It is found in the cytoplasm. The protein resides in the cytosol. Its subcellular location is the membrane. It carries out the reaction (9Z,12Z)-octadecadienoate + O2 = (9S)-hydroperoxy-(10E,12Z)-octadecadienoate. The enzyme catalyses (5Z,8Z,11Z,14Z)-eicosatetraenoate + O2 = (8S)-hydroperoxy-(5Z,9E,11Z,14Z)-eicosatetraenoate. The catalysed reaction is (15S)-hydroperoxy-(5Z,8Z,11Z,13E)-eicosatetraenoate + O2 = (8S,15S)-dihydroperoxy-(5Z,9E,11Z,13E)-eicosatetraenoate. It catalyses the reaction (8S)-hydroperoxy-(5Z,9E,11Z,14Z)-eicosatetraenoate + O2 = (8S,15S)-dihydroperoxy-(5Z,9E,11Z,13E)-eicosatetraenoate. It carries out the reaction 1-octadecanoyl-2-(5Z,8Z,11Z,14Z-eicosatetraenoyl)-sn-glycero-3-phosphocholine + O2 = 1-octadecanoyl-2-(15-hydroperoxy-5Z,8Z,11Z,13E-eicosatetraenoyl)-sn-glycero-3-phosphocholine. The enzyme catalyses a 1-acyl-2-(5Z,8Z,11Z,14Z-eicosatetraenoyl)-sn-glycero-3-phospho-(1D-myo-inositol) + O2 = a 1-acyl-2-(15-hydroperoxy-5Z,8Z,11Z,13E-eicosatetraenoyl)-sn-glycero-3-phospho-(1D-myo-inositol). The catalysed reaction is a 1-acyl-2-(8Z,11Z,14Z-eicosatrienoyl)-sn-glycero-3-phospho-(1D-myo-inositol) + O2 = a 1-acyl-2-(15-hydroperoxy-8Z,11Z,13E-eicosatrienoyl)-sn-glycero-3-phospho-(1D-myo-inositol). It catalyses the reaction (5Z,8Z,11Z,14Z)-eicosatetraenoate + O2 = 9-hydroperoxy-(5Z,7E,11Z,14Z)-eicosatetraenoate. It carries out the reaction (5Z,8Z,11Z,14Z)-eicosatetraenoate + O2 = 11-hydroperoxy-(5Z,8Z,12E,14Z)-eicosatetraenoate. The enzyme catalyses (8Z,11Z,14Z)-eicosatrienoate + O2 = 15-hydroperoxy-(8Z,11Z,13E)-eicosatrienoate. It functions in the pathway lipid metabolism; hydroperoxy eicosatetraenoic acid biosynthesis. Its function is as follows. Non-heme iron-containing dioxygenase that catalyzes the stereo-specific peroxidation of free and esterified polyunsaturated fatty acids generating a spectrum of bioactive lipid mediators. Catalyzes the peroxidation of arachidonate and linoleate into (8S)-HPETE and (9S)-HPODE respectively. In addition to generate (8S)-HPETE from free arachidonic acid (AA), may produce other HETE isomers from phospholipid-esterified polyunsaturated fatty acids and minor products derived from (8S)-HPETE itself that may include leukotriene A4 and 8,15-diHPETE. With free arachidonate as substrate, has no detectable 15S-lipoxygenase activity and only displays a 8S-lipoxygenase activity. However may have a 15S-lipoxygenase activity with (8S)-HPETE to produce (8S,15S)-diHPETE and when oxidizes directly arachidonic acid esterified to membrane-bound phospholipids to produce a phospholipid-esterified 15-HpETE. May also catalyze (15S)-HPETE peroxidation to produce 8,15-diHPETE. May play a role in keratinocyte differentiation through activation of the peroxisome proliferator activated receptor signaling pathway. The chain is Polyunsaturated fatty acid lipoxygenase ALOX8 from Mus musculus (Mouse).